A 416-amino-acid chain; its full sequence is Probable histone-binding protein lin-53 (416 aa).

6 WD repeats span residues 118 to 158 (NHEG…SVPK), 170 to 210 (GHTK…GANG), 220 to 260 (GHES…PGHA), 263 to 303 (AHSA…LKLH), 307 to 347 (SHRD…EDQT), and 364 to 404 (GHTA…YNDV).

Belongs to the WD repeat RBAP46/RBAP48/MSI1 family. Binds directly to helix 1 of the histone fold of histone H4, a region that is not accessible when H4 is in chromatin. Probable component of a NuRD-like complex, composed of at least lin-53 and hda-1. Interacts with lin-35. Interacts with hda-1; the interaction is direct. Component of the DRM complex, at least composed of lin-9, lin-35, lin-37, lin-52, lin-53, lin-54- dpl-1 and efl-1. Interacts with hcp-3.

The protein localises to the nucleus. It is found in the chromosome. It localises to the centromere. Functionally, core histone-binding subunit that may target chromatin assembly factors, chromatin remodeling factors and histone deacetylases to their histone substrates in a manner that is regulated by nucleosomal DNA. Required for hcp-3 and his-1 stabilization, localization of hcp-3 to centromeres and for proper chromosome segregation. Synthetic multivulva class B (synMuvB) protein. SynMuvB proteins are required to repress the induction of vulval development by Ras signaling and probably act by forming the multiprotein DRM complex that represses transcription. In Caenorhabditis briggsae, this protein is Probable histone-binding protein lin-53.